We begin with the raw amino-acid sequence, 169 residues long: uncharacterized protein (169 aa).

The 157-residue stretch at 4–160 (IEVKRLLVNY…EGVKEQLSED (157 aa)) folds into the N-acetyltransferase domain.

This is an uncharacterized protein from Halalkalibacterium halodurans (strain ATCC BAA-125 / DSM 18197 / FERM 7344 / JCM 9153 / C-125) (Bacillus halodurans).